Here is a 249-residue protein sequence, read N- to C-terminus: Aspartate/glutamate leucyltransferase (249 aa).

This sequence belongs to the R-transferase family. Bpt subfamily.

It localises to the cytoplasm. The catalysed reaction is N-terminal L-glutamyl-[protein] + L-leucyl-tRNA(Leu) = N-terminal L-leucyl-L-glutamyl-[protein] + tRNA(Leu) + H(+). It carries out the reaction N-terminal L-aspartyl-[protein] + L-leucyl-tRNA(Leu) = N-terminal L-leucyl-L-aspartyl-[protein] + tRNA(Leu) + H(+). Its function is as follows. Functions in the N-end rule pathway of protein degradation where it conjugates Leu from its aminoacyl-tRNA to the N-termini of proteins containing an N-terminal aspartate or glutamate. The polypeptide is Aspartate/glutamate leucyltransferase (Brucella canis (strain ATCC 23365 / NCTC 10854 / RM-666)).